Consider the following 199-residue polypeptide: Recombination protein RecR (199 aa).

The C4-type zinc-finger motif lies at 57 to 72 (CTVCGHITDIDPCAIC). Residues 80–176 (TVVCVVQDSR…RVTRLAHGLP (97 aa)) enclose the Toprim domain.

Belongs to the RecR family.

Its function is as follows. May play a role in DNA repair. It seems to be involved in an RecBC-independent recombinational process of DNA repair. It may act with RecF and RecO. The sequence is that of Recombination protein RecR from Exiguobacterium sp. (strain ATCC BAA-1283 / AT1b).